We begin with the raw amino-acid sequence, 910 residues long: Protein translocase subunit SecA (910 aa).

Residues glutamine 86, 104–108 (GEGKT), and aspartate 508 each bind ATP. 4 residues coordinate Zn(2+): cysteine 894, cysteine 896, cysteine 905, and cysteine 906.

It belongs to the SecA family. In terms of assembly, monomer and homodimer. Part of the essential Sec protein translocation apparatus which comprises SecA, SecYEG and auxiliary proteins SecDF. Other proteins may also be involved. Requires Zn(2+) as cofactor.

It is found in the cell membrane. It localises to the cytoplasm. It catalyses the reaction ATP + H2O + cellular proteinSide 1 = ADP + phosphate + cellular proteinSide 2.. Its function is as follows. Part of the Sec protein translocase complex. Interacts with the SecYEG preprotein conducting channel. Has a central role in coupling the hydrolysis of ATP to the transfer of proteins into and across the cell membrane, serving as an ATP-driven molecular motor driving the stepwise translocation of polypeptide chains across the membrane. The sequence is that of Protein translocase subunit SecA from Acetivibrio thermocellus (strain ATCC 27405 / DSM 1237 / JCM 9322 / NBRC 103400 / NCIMB 10682 / NRRL B-4536 / VPI 7372) (Clostridium thermocellum).